A 98-amino-acid chain; its full sequence is Protein S100-A13 (98 aa).

One can recognise an EF-hand domain in the interval 18-53 (STFFTFAGREGRKGSLNINEFKELATQQLPHLLKDV). Residues Ser-32, Glu-37, Asp-64, Asn-66, Asp-68, Glu-70, and Glu-75 each coordinate Ca(2+). Ser-32 carries the post-translational modification Phosphoserine.

It belongs to the S-100 family. Homodimer. Part of a copper-dependent multiprotein complex containing S100A13, FGF1 and SYT1. Interacts with FGF1 and SYT1. Interacts with IL1A.

It localises to the cytoplasm. The protein localises to the secreted. Its function is as follows. Plays a role in the export of proteins that lack a signal peptide and are secreted by an alternative pathway. Binds two calcium ions per subunit. Binds one copper ion. Binding of one copper ion does not interfere with calcium binding. Required for the copper-dependent stress-induced export of IL1A and FGF1. The calcium-free protein binds to lipid vesicles containing phosphatidylserine, but not to vesicles containing phosphatidylcholine. This is Protein S100-A13 (S100a13) from Mus musculus (Mouse).